A 247-amino-acid polypeptide reads, in one-letter code: Adenosylcobinamide-GDP ribazoletransferase (247 aa).

The next 4 helical transmembrane spans lie at 34–54, 59–79, 113–133, and 194–214; these read IITFPLIGLLLGAISGLVFMV, CGVPLAALFSVLVLALMTGGF, GGLALIFVVLAKILVLSELAL, and VLLPGMHGVAAMVVTMVAIFI.

This sequence belongs to the CobS family. Requires Mg(2+) as cofactor.

Its subcellular location is the cell inner membrane. The catalysed reaction is alpha-ribazole + adenosylcob(III)inamide-GDP = adenosylcob(III)alamin + GMP + H(+). It catalyses the reaction alpha-ribazole 5'-phosphate + adenosylcob(III)inamide-GDP = adenosylcob(III)alamin 5'-phosphate + GMP + H(+). It participates in cofactor biosynthesis; adenosylcobalamin biosynthesis; adenosylcobalamin from cob(II)yrinate a,c-diamide: step 7/7. Functionally, joins adenosylcobinamide-GDP and alpha-ribazole to generate adenosylcobalamin (Ado-cobalamin). Also synthesizes adenosylcobalamin 5'-phosphate from adenosylcobinamide-GDP and alpha-ribazole 5'-phosphate. The polypeptide is Adenosylcobinamide-GDP ribazoletransferase (Escherichia coli (strain ATCC 8739 / DSM 1576 / NBRC 3972 / NCIMB 8545 / WDCM 00012 / Crooks)).